Here is a 200-residue protein sequence, read N- to C-terminus: Holliday junction branch migration complex subunit RuvA (200 aa).

The domain I stretch occupies residues 1–65 (MYEYIKGTLT…ETEHVLYGFS (65 aa)). Residues 66-144 (SRAERECFRL…TLMPLYLEEP (79 aa)) are domain II. The flexible linker stretch occupies residues 145-149 (VVPSS). The segment at 150-200 (TANSSFKEGIGALMNLGFSRLAADRMMTEAVKELSEEASVAELLPIALRKS) is domain III.

This sequence belongs to the RuvA family. In terms of assembly, homotetramer. Forms an RuvA(8)-RuvB(12)-Holliday junction (HJ) complex. HJ DNA is sandwiched between 2 RuvA tetramers; dsDNA enters through RuvA and exits via RuvB. An RuvB hexamer assembles on each DNA strand where it exits the tetramer. Each RuvB hexamer is contacted by two RuvA subunits (via domain III) on 2 adjacent RuvB subunits; this complex drives branch migration. In the full resolvosome a probable DNA-RuvA(4)-RuvB(12)-RuvC(2) complex forms which resolves the HJ.

The protein resides in the cytoplasm. Its function is as follows. The RuvA-RuvB-RuvC complex processes Holliday junction (HJ) DNA during genetic recombination and DNA repair, while the RuvA-RuvB complex plays an important role in the rescue of blocked DNA replication forks via replication fork reversal (RFR). RuvA specifically binds to HJ cruciform DNA, conferring on it an open structure. The RuvB hexamer acts as an ATP-dependent pump, pulling dsDNA into and through the RuvAB complex. HJ branch migration allows RuvC to scan DNA until it finds its consensus sequence, where it cleaves and resolves the cruciform DNA. The chain is Holliday junction branch migration complex subunit RuvA from Chlamydia trachomatis serovar D (strain ATCC VR-885 / DSM 19411 / UW-3/Cx).